Consider the following 1249-residue polypeptide: MEEVITIAQIVHRGTDILSLNNEEIEALVDEIYSTLKGSNDIKNIRLIDFLFTLKDFVNHVRAEQSKLPDLSMPMEAYIRQLLVDPDVVPIVSEKKKELRVRPSTRKEIFLINGTHLAVPAEAPIEIYGLKLRLKSFSPQCFMRMAEIGSFSPETLGYVASGANLTNFIRVFMKCVDQETWKKNGEGVVVTTKENIIQFTHQYIELYKFLRSGGHSWLINRLAEEMVHRKLDREDQGSHISNIVETEEIEPEENIKRVIFFLKELSTMYSVSPVFTSGYMPLLYDLYRAGYLEVLWNPVEQKFLQHAEQREKEQMILQQVDMKLTEVITQARQYFKIMEEKIGRVQSDAIREILTMEGKVDDPNSILQEVIKACGKQEAELITTEYLNIKKQWELQEKNACAHLKLVKQLRSGLQYAELLKVLESIRVLYKEKNNTTNWNLCKACGFKLLCPHVDMLIQLQAAEASYDTMRTKLMKFSGINKEKENNQGLIYSYFCKICGEELAHFIQEDRTADVGVIGDLNSKLRIFIWQETMKACTFIHFGKLVDVKQFANIAVNVCLPLVYSIENIKKEEDYDPLTQLYAVIYIYAYILNLIYSSQKNKEFLTITIHGMKADSSLNAYVTFLLEKMMQQYSGIINQLSEITDQWIANNFREAFKKIIHQNGLQGLSVQDDTKVLLTEILLGPMYDYAATVARIDGSIPMHKPRTPKEAEYEFKTVIGRTPAELLSQKEFYDKIYTSKYRPDFTQLARLNDIYFQEESLRVWWGGRDEEKTSTLIYLRAYELFLKYLQNAPNFNSELAEFKTYENAYGEQKALLAQQGFYNIFDPNTGRADQRTRLFEYKRLPISTLYDERGLPHKWTIYVYKAVDSSQKPAEIEVTRKDVIKKIDNHYALADLRCSVCHVLQHEVGQLNIKKVQTALKASLEFNTFYAFYESRCPKGGLHDFQDKKCVKCGLFTYIIYDHLSQPELVHDYYNNYKDQYDKEKMSIRSIQIKKDMTTPSSETQPKPPQEPWTFDYGKIIKTAKILDISPAVIEAIGAMEGRSYADIREGQGAPPPPTSMDDPRLMAVDSAVRIFLYNYNCLRHVSTFNKPPMHVERLVKHLSYEEKEDLEKVLPNVVNEYHTTFKHLRVTDPASALLYSIEFLCVSFLTLYEIKEPSWVVNIVREFALTELNTIIQSEKLLSKPGAFNFMIFGEDFVCSGEDSSMDDISAYSSPGLFGEDIIDRLDDPFSIEDVDISLDVLDNLAPQ.

Belongs to the asfivirus M1249L family. Interacts with the minor capsid protein p17 and with the hexon capsid protein p72 capsomers; these interactions form a rigid zipper structure that stabilizes the capsomers. Interacts with host IRF3.

The protein localises to the virion. It localises to the host cytoplasm. Functionally, together with the penton and the other minor capsid proteins (p17, p49), forms a complicated network immediately below the outer capsid shell, stabilizing the whole capsid. In addition, blocks IFN-beta transactivation mediated by the cGAS-STING pathway and regulates the transcriptional activity of IFN-beta. Mechanistically, suppresses the phosphorylation of host key adapter protein TBK1 and degrades host IRF3 in the cytoplasm. The chain is Minor capsid protein M1249L from Ornithodoros (relapsing fever ticks).